A 415-amino-acid chain; its full sequence is F-box protein At3g13820 (415 aa).

The region spanning Met1–Gln50 is the F-box domain. 2 disordered regions span residues Asn209–Asp229 and Lys387–Gly415. A compositionally biased stretch (acidic residues) spans Asp210–Asp229. Residues Asn403–Gly415 are compositionally biased toward basic residues.

The protein is F-box protein At3g13820 of Arabidopsis thaliana (Mouse-ear cress).